The chain runs to 120 residues: Glycine cleavage system H protein (120 aa).

Residues 17–99 enclose the Lipoyl-binding domain; the sequence is VATVGITNYA…QGAGWFFKLK (83 aa). Lys58 carries the post-translational modification N6-lipoyllysine.

Belongs to the GcvH family. As to quaternary structure, the glycine cleavage system is composed of four proteins: P, T, L and H. The cofactor is (R)-lipoate.

In terms of biological role, the glycine cleavage system catalyzes the degradation of glycine. The H protein shuttles the methylamine group of glycine from the P protein to the T protein. The sequence is that of Glycine cleavage system H protein from Rhizobium etli (strain ATCC 51251 / DSM 11541 / JCM 21823 / NBRC 15573 / CFN 42).